The following is a 135-amino-acid chain: Ribosome-binding factor A (135 aa).

The protein belongs to the RbfA family. Monomer. Binds 30S ribosomal subunits, but not 50S ribosomal subunits or 70S ribosomes.

Its subcellular location is the cytoplasm. Its function is as follows. One of several proteins that assist in the late maturation steps of the functional core of the 30S ribosomal subunit. Associates with free 30S ribosomal subunits (but not with 30S subunits that are part of 70S ribosomes or polysomes). Required for efficient processing of 16S rRNA. May interact with the 5'-terminal helix region of 16S rRNA. This chain is Ribosome-binding factor A, found in Sinorhizobium fredii (strain NBRC 101917 / NGR234).